Reading from the N-terminus, the 389-residue chain is MSENTFPGRLGINPFGPESRAANTEKPSTSHIVRVTERDEDKVNPTFNNKPLKKFAGDRATNTPLQAFKLGASDGFPEHYGMGRRTSVSAESLNPNPTASSNESWTPPYHRKTPEQLERLKKSISGNFLFNHLDDEQSAQVLGALVEKPIPVKDIKVISQGDQGDFFYVVEKGSFDVYVNPAGSVQPGLGGLGNKVATIEPGGSFGELALMYNAPRAATVISAEGSCTLWSLDRITFRRILMDSTFKCRRLYESFLEEVTLLSTLTKYERSKIADALVTLKYPAGTTIKEGDVGEEFYLLESGEAEAFKAGCQNAVKCYSKGDYFGELALLNDAPRAASVVSKTEVKVAKLGKDGFQRLLGPVESIMRRTKYEGVEEIDREFPGSAAAL.

Disordered stretches follow at residues 1 to 57 and 87 to 110; these read MSEN…KFAG and SVSA…PPYH. A dimerization and phosphorylation region spans residues 1–128; it reads MSENTFPGRL…RLKKSISGNF (128 aa). The span at 21-31 shows a compositional bias: polar residues; sequence AANTEKPSTSH. Over residues 34–43 the composition is skewed to basic and acidic residues; the sequence is RVTERDEDKV. Phosphoserine is present on Ser87. Over residues 87–105 the composition is skewed to polar residues; the sequence is SVSAESLNPNPTASSNESW. Residues 129-258, Glu207, Arg216, 261-377, Glu327, and Arg336 each bind 3',5'-cyclic AMP; these read LFNH…FLEE and LLST…GVEE.

The protein belongs to the cAMP-dependent kinase regulatory chain family. In terms of assembly, tetramer, composed of 2 regulatory (R) and 2 catalytic (C) subunits. In the presence of cAMP it dissociates into 2 active monomeric C subunits and an R dimer.

This Blumeria graminis (Powdery mildew) protein is cAMP-dependent protein kinase regulatory subunit (pkar).